The following is a 626-amino-acid chain: Coilin (626 aa).

Serine 148 and serine 162 each carry phosphoserine. Disordered stretches follow at residues 253-309 (LTSQ…ISSN) and 382-433 (RGCE…NKKS). A compositionally biased stretch (low complexity) spans 260–292 (STPSESDSSSSESSSSVSDSSDLSSTSDSSSGD). The span at 382-395 (RGCENTEKPSEEGK) shows a compositional bias: basic and acidic residues. Polar residues predominate over residues 396–417 (NFTTPLSDSVESENTWSNTLRS).

The protein belongs to the coilin family. Interacts with tgs1; both proteins are required to maintain Cajal body integrity. Interacts with U2 and U5 snRNAs.

It localises to the cytoplasm. It is found in the nucleus. Its subcellular location is the cajal body. Its function is as follows. Component of nuclear coiled bodies, also known as Cajal bodies or CBs, which are involved in the modification and assembly of nucleoplasmic snRNPs. Required for proper pre-mRNA splicing. The sequence is that of Coilin from Schizosaccharomyces pombe (strain 972 / ATCC 24843) (Fission yeast).